The following is a 147-amino-acid chain: Pathogenesis-related protein PR-4B (147 aa).

The signal sequence occupies residues 1 to 25 (MERVNNYKLCVALLIMSVMMAMAAA). In terms of domain architecture, Barwin spans 26–147 (QSATNVRSTY…VNYEFVNCND (122 aa)). 3 disulfide bridges follow: C54–C86, C75–C109, and C89–C145.

The protein resides in the secreted. The protein localises to the cell wall. In Nicotiana tabacum (Common tobacco), this protein is Pathogenesis-related protein PR-4B.